The following is a 276-amino-acid chain: Dermonecrotic toxin LafSicTox-betaIE2 (276 aa).

H5 is an active-site residue. Positions 25 and 27 each coordinate Mg(2+). H41 acts as the Nucleophile in catalysis. Disulfide bonds link C45/C51 and C47/C189. D85 is a Mg(2+) binding site.

It belongs to the arthropod phospholipase D family. Class II subfamily. Requires Mg(2+) as cofactor. In terms of tissue distribution, expressed by the venom gland.

It localises to the secreted. The catalysed reaction is an N-(acyl)-sphingosylphosphocholine = an N-(acyl)-sphingosyl-1,3-cyclic phosphate + choline. It catalyses the reaction an N-(acyl)-sphingosylphosphoethanolamine = an N-(acyl)-sphingosyl-1,3-cyclic phosphate + ethanolamine. It carries out the reaction a 1-acyl-sn-glycero-3-phosphocholine = a 1-acyl-sn-glycero-2,3-cyclic phosphate + choline. The enzyme catalyses a 1-acyl-sn-glycero-3-phosphoethanolamine = a 1-acyl-sn-glycero-2,3-cyclic phosphate + ethanolamine. Dermonecrotic toxins cleave the phosphodiester linkage between the phosphate and headgroup of certain phospholipids (sphingolipid and lysolipid substrates), forming an alcohol (often choline) and a cyclic phosphate. This toxin acts on sphingomyelin (SM). It may also act on ceramide phosphoethanolamine (CPE), lysophosphatidylcholine (LPC) and lysophosphatidylethanolamine (LPE), but not on lysophosphatidylserine (LPS), and lysophosphatidylglycerol (LPG). It acts by transphosphatidylation, releasing exclusively cyclic phosphate products as second products. Induces dermonecrosis, hemolysis, increased vascular permeability, edema, inflammatory response, and platelet aggregation. The chain is Dermonecrotic toxin LafSicTox-betaIE2 from Loxosceles aff. spinulosa (strain GJB-2008) (Recluse spider).